Here is a 344-residue protein sequence, read N- to C-terminus: Probable electron transfer flavoprotein subunit alpha, mitochondrial (344 aa).

An FAD-binding site is contributed by 284-312 (LYIAIGVSGAVQHLAGMKDSKVIVAINND).

It belongs to the ETF alpha-subunit/FixB family. Heterodimer of an alpha and a beta subunit. It depends on FAD as a cofactor.

Its subcellular location is the mitochondrion matrix. The electron transfer flavoprotein serves as a specific electron acceptor for several dehydrogenases, including five acyl-CoA dehydrogenases, glutaryl-CoA and sarcosine dehydrogenase. It transfers the electrons to the main mitochondrial respiratory chain via ETF-ubiquinone oxidoreductase (ETF dehydrogenase). In Saccharomyces cerevisiae (strain ATCC 204508 / S288c) (Baker's yeast), this protein is Probable electron transfer flavoprotein subunit alpha, mitochondrial (AIM45).